Reading from the N-terminus, the 385-residue chain is Period circadian protein (385 aa).

Disordered stretches follow at residues 28–121 (TAPV…VPPV), 169–189 (GPGPGHGHGIKRGGSHSWEGE), and 322–351 (SPASGTSPNPRPHKHTHVHPSSEQPSTSQG). The span at 71-93 (SGNFTTGSNLHMSSVTNTSNAGT) shows a compositional bias: low complexity. Gly residues predominate over residues 94–115 (GTSGTGNSGDGGGGGAGDGPGS). The segment covering 340-351 (HPSSEQPSTSQG) has biased composition (polar residues).

Forms a heterodimer with timeless (TIM); the complex then translocates into the nucleus. Post-translationally, phosphorylated with a circadian rhythmicity, probably by the double-time protein (dbt). Phosphorylation could be implicated in the stability of per monomer and in the formation of heterodimer per-tim.

Its subcellular location is the nucleus. The protein resides in the cytoplasm. It localises to the perinuclear region. In terms of biological role, essential for biological clock functions. Determines the period length of circadian and ultradian rhythms; an increase in PER dosage leads to shortened circadian rhythms and a decrease leads to lengthened circadian rhythms. Essential for the circadian rhythmicity of locomotor activity, eclosion behavior, and for the rhythmic component of the male courtship song that originates in the thoracic nervous system. The biological cycle depends on the rhythmic formation and nuclear localization of the TIM-PER complex. Light induces the degradation of TIM, which promotes elimination of PER. Nuclear activity of the heterodimer coordinatively regulates PER and TIM transcription through a negative feedback loop. Behaves as a negative element in circadian transcriptional loop. Does not appear to bind DNA, suggesting indirect transcriptional inhibition. The polypeptide is Period circadian protein (per) (Drosophila nebulosa (Fruit fly)).